We begin with the raw amino-acid sequence, 94 residues long: Integration host factor subunit beta (94 aa).

This sequence belongs to the bacterial histone-like protein family. Heterodimer of an alpha and a beta chain.

In terms of biological role, this protein is one of the two subunits of integration host factor, a specific DNA-binding protein that functions in genetic recombination as well as in transcriptional and translational control. This chain is Integration host factor subunit beta, found in Escherichia fergusonii (strain ATCC 35469 / DSM 13698 / CCUG 18766 / IAM 14443 / JCM 21226 / LMG 7866 / NBRC 102419 / NCTC 12128 / CDC 0568-73).